Here is a 223-residue protein sequence, read N- to C-terminus: Na(+)-translocating NADH-quinone reductase subunit D (223 aa).

A run of 5 helical transmembrane segments spans residues 42 to 62, 66 to 86, 103 to 123, 131 to 151, and 178 to 198; these read TVMA…ISMI, IPSS…VIVV, VFVG…AFAM, FFDG…LGFI, and NGLL…IWAL.

Belongs to the NqrDE/RnfAE family. As to quaternary structure, composed of six subunits; NqrA, NqrB, NqrC, NqrD, NqrE and NqrF.

It is found in the cell inner membrane. It catalyses the reaction a ubiquinone + n Na(+)(in) + NADH + H(+) = a ubiquinol + n Na(+)(out) + NAD(+). In terms of biological role, NQR complex catalyzes the reduction of ubiquinone-1 to ubiquinol by two successive reactions, coupled with the transport of Na(+) ions from the cytoplasm to the periplasm. NqrA to NqrE are probably involved in the second step, the conversion of ubisemiquinone to ubiquinol. The polypeptide is Na(+)-translocating NADH-quinone reductase subunit D (Pseudomonas paraeruginosa (strain DSM 24068 / PA7) (Pseudomonas aeruginosa (strain PA7))).